A 361-amino-acid polypeptide reads, in one-letter code: Phosphoserine aminotransferase (361 aa).

The L-glutamate site is built by S9 and R42. Residues 76-77 (GR), W102, T153, D173, and Q196 each bind pyridoxal 5'-phosphate. N6-(pyridoxal phosphate)lysine is present on K197. Residue 238–239 (NT) participates in pyridoxal 5'-phosphate binding.

Belongs to the class-V pyridoxal-phosphate-dependent aminotransferase family. SerC subfamily. Homodimer. The cofactor is pyridoxal 5'-phosphate.

The protein localises to the cytoplasm. It carries out the reaction O-phospho-L-serine + 2-oxoglutarate = 3-phosphooxypyruvate + L-glutamate. The catalysed reaction is 4-(phosphooxy)-L-threonine + 2-oxoglutarate = (R)-3-hydroxy-2-oxo-4-phosphooxybutanoate + L-glutamate. Its pathway is amino-acid biosynthesis; L-serine biosynthesis; L-serine from 3-phospho-D-glycerate: step 2/3. It participates in cofactor biosynthesis; pyridoxine 5'-phosphate biosynthesis; pyridoxine 5'-phosphate from D-erythrose 4-phosphate: step 3/5. Catalyzes the reversible conversion of 3-phosphohydroxypyruvate to phosphoserine and of 3-hydroxy-2-oxo-4-phosphonooxybutanoate to phosphohydroxythreonine. In Cronobacter sakazakii (strain ATCC BAA-894) (Enterobacter sakazakii), this protein is Phosphoserine aminotransferase.